The sequence spans 493 residues: Trigger factor (493 aa).

The PPIase FKBP-type domain occupies 169-254 (GDRVTMDYLG…VKEVAAPAET (86 aa)). Residues 439 to 493 (ELLAEDEDGDDTKPAKKSAKKKAAKAEDASAEGEEAAPKKKAAAKKKAADEGDAE) are disordered.

It belongs to the FKBP-type PPIase family. Tig subfamily.

The protein localises to the cytoplasm. It carries out the reaction [protein]-peptidylproline (omega=180) = [protein]-peptidylproline (omega=0). Involved in protein export. Acts as a chaperone by maintaining the newly synthesized protein in an open conformation. Functions as a peptidyl-prolyl cis-trans isomerase. The sequence is that of Trigger factor from Allorhizobium ampelinum (strain ATCC BAA-846 / DSM 112012 / S4) (Agrobacterium vitis (strain S4)).